Consider the following 180-residue polypeptide: Ribulose bisphosphate carboxylase small subunit, chloroplastic 3 (180 aa).

The transit peptide at 1–56 directs the protein to the chloroplast; sequence MASSVMSSAAVATRGNGAQASMVAPFTGLKSTASFPVSRKQNLDITSIASNGGRVS.

The protein belongs to the RuBisCO small chain family. In terms of assembly, heterohexadecamer of 8 large and 8 small subunits. (Microbial infection) Binds to tobamovirus movement protein; this interaction seems required for viral systemic movement.

It localises to the plastid. It is found in the chloroplast. Its subcellular location is the cell junction. The protein localises to the plasmodesma. Functionally, ruBisCO catalyzes two reactions: the carboxylation of D-ribulose 1,5-bisphosphate, the primary event in carbon dioxide fixation, as well as the oxidative fragmentation of the pentose substrate. Both reactions occur simultaneously and in competition at the same active site. Although the small subunit is not catalytic it is essential for maximal activity. Involved in antiviral defenses. The chain is Ribulose bisphosphate carboxylase small subunit, chloroplastic 3 from Solanum lycopersicum (Tomato).